Reading from the N-terminus, the 379-residue chain is Cathepsin B-like cysteine proteinase 6 (379 aa).

The first 16 residues, 1-16 (MKTLLFLSCIVVAAYC), serve as a signal peptide directing secretion. The propeptide occupies 17–104 (ACNDNLESVL…LSKTKDLDLD (88 aa)). Intrachain disulfides connect cysteine 118/cysteine 147, cysteine 130/cysteine 174, cysteine 166/cysteine 233, cysteine 167/cysteine 170, cysteine 203/cysteine 237, and cysteine 211/cysteine 223. Cysteine 133 is a catalytic residue. The N-linked (GlcNAc...) asparagine glycan is linked to asparagine 196. Asparagine 201 carries an N-linked (GlcNAc...) asparagine; atypical glycan. Active-site residues include histidine 305 and asparagine 325.

The protein belongs to the peptidase C1 family.

The sequence is that of Cathepsin B-like cysteine proteinase 6 (cpr-6) from Caenorhabditis elegans.